We begin with the raw amino-acid sequence, 199 residues long: Large ribosomal subunit protein bL9 (199 aa).

Residues 153 to 199 are disordered; sequence KPVKASEKKGRRPRRDEEASDEQILAEENSVTEEAVSEEIQNSESEN.

Belongs to the bacterial ribosomal protein bL9 family.

Binds to the 23S rRNA. This chain is Large ribosomal subunit protein bL9, found in Treponema denticola (strain ATCC 35405 / DSM 14222 / CIP 103919 / JCM 8153 / KCTC 15104).